We begin with the raw amino-acid sequence, 2289 residues long: DNA polymerase II large subunit (2289 aa).

Disordered stretches follow at residues 279-330 (IGSD…SPRA) and 544-563 (SDTN…NTDD). A compositionally biased stretch (basic and acidic residues) spans 292-304 (GEADIVKTDKDTN). Positions 305 to 318 (ESETEDGIDNDDYN) are enriched in acidic residues. Residues 544–557 (SDTNSASGNTSLRA) show a composition bias toward polar residues. 2 DOD-type homing endonuclease domains span residues 1222-1367 (LLGY…RLGI) and 1755-1911 (LLGQ…RLGV).

It belongs to the archaeal DNA polymerase II family. Heterodimer of a large subunit and a small subunit. This protein undergoes a protein self splicing that involves a post-translational excision of the intervening region (intein) followed by peptide ligation.

It carries out the reaction DNA(n) + a 2'-deoxyribonucleoside 5'-triphosphate = DNA(n+1) + diphosphate. The enzyme catalyses Exonucleolytic cleavage in the 3'- to 5'-direction to yield nucleoside 5'-phosphates.. Its function is as follows. Possesses two activities: a DNA synthesis (polymerase) and an exonucleolytic activity that degrades single-stranded DNA in the 3'- to 5'-direction. Has a template-primer preference which is characteristic of a replicative DNA polymerase. This is DNA polymerase II large subunit from Haloquadratum walsbyi (strain DSM 16790 / HBSQ001).